We begin with the raw amino-acid sequence, 315 residues long: Probable cell division protein WhiA (315 aa).

A DNA-binding region (H-T-H motif) is located at residues 274–308 (SLKNLGELIPGGPISKSGINHRLRKLNEIAEKIRA).

The protein belongs to the WhiA family.

Involved in cell division and chromosome segregation. In Ligilactobacillus salivarius (strain UCC118) (Lactobacillus salivarius), this protein is Probable cell division protein WhiA.